A 246-amino-acid chain; its full sequence is Protein phosphatase PhpP (246 aa).

The PPM-type phosphatase domain maps to 2 to 240 (EISLLTDVGQ…DNITVALVSM (239 aa)). 4 residues coordinate Mn(2+): aspartate 36, glycine 37, aspartate 192, and aspartate 231.

It belongs to the PP2C family. In terms of assembly, interacts with the kinase domain of StkP. Mn(2+) is required as a cofactor.

The protein localises to the cytoplasm. The catalysed reaction is O-phospho-L-seryl-[protein] + H2O = L-seryl-[protein] + phosphate. The enzyme catalyses O-phospho-L-threonyl-[protein] + H2O = L-threonyl-[protein] + phosphate. With respect to regulation, phosphatase activity is inhibited by NaF but not by okadaic acid. Functionally, protein phosphatase able to dephosphorylate StkP-P and a phosphothreonine residue in a phosphopeptide synthetic substrate. PhpP and its cognate protein kinase StkP appear to constitute a functional signaling couple in vivo, PhpP's primary role probably being to control phosphorylation levels of StkP and of its targets (which include LocZ, DivIVA and KhpB (also called EloR/Jag)). PhpP thus performs an essential control of StkP activity. Overexpression confers an stkP deletion-like phenotype. The chain is Protein phosphatase PhpP (phpP) from Streptococcus pneumoniae.